Consider the following 339-residue polypeptide: Phosphate acyltransferase (339 aa).

Belongs to the PlsX family. As to quaternary structure, homodimer. Probably interacts with PlsY.

It localises to the cytoplasm. It carries out the reaction a fatty acyl-[ACP] + phosphate = an acyl phosphate + holo-[ACP]. The protein operates within lipid metabolism; phospholipid metabolism. Its function is as follows. Catalyzes the reversible formation of acyl-phosphate (acyl-PO(4)) from acyl-[acyl-carrier-protein] (acyl-ACP). This enzyme utilizes acyl-ACP as fatty acyl donor, but not acyl-CoA. The protein is Phosphate acyltransferase of Acetivibrio thermocellus (strain ATCC 27405 / DSM 1237 / JCM 9322 / NBRC 103400 / NCIMB 10682 / NRRL B-4536 / VPI 7372) (Clostridium thermocellum).